Reading from the N-terminus, the 908-residue chain is Protein translocase subunit SecA (908 aa).

ATP-binding positions include Gln-87, 105–109 (GEGKT), and Asp-512. Residues 865–908 (GGDDGSDEMMAHTPMIRDGDKVGRNDPCPCGSGRKYKQCHGKLS) form a disordered region. Residues 879 to 888 (MIRDGDKVGR) are compositionally biased toward basic and acidic residues. Positions 892, 894, 903, and 904 each coordinate Zn(2+). The segment covering 898 to 908 (RKYKQCHGKLS) has biased composition (basic residues).

This sequence belongs to the SecA family. Monomer and homodimer. Part of the essential Sec protein translocation apparatus which comprises SecA, SecYEG and auxiliary proteins SecDF-YajC and YidC. Zn(2+) serves as cofactor.

The protein resides in the cell inner membrane. The protein localises to the cytoplasm. The catalysed reaction is ATP + H2O + cellular proteinSide 1 = ADP + phosphate + cellular proteinSide 2.. Its function is as follows. Part of the Sec protein translocase complex. Interacts with the SecYEG preprotein conducting channel. Has a central role in coupling the hydrolysis of ATP to the transfer of proteins into and across the cell membrane, serving both as a receptor for the preprotein-SecB complex and as an ATP-driven molecular motor driving the stepwise translocation of polypeptide chains across the membrane. This chain is Protein translocase subunit SecA, found in Shewanella sp. (strain MR-7).